Consider the following 437-residue polypeptide: MSMFLDTAKISVQAGRGGDGMVAFRREKYVPNGGPWGGDGGKGGSVIFRVDEGLRTLMDFRYNRKFKAKSGEKGMTKGMHGRGAEDLIVFVPQGTTVRDAETGKVIIDLVEHGQEVVIAKGGRGGRGNIRFATPRNPAPEIAENGEPGEERQLELELKILADVGLVGFPSVGKSTLLSVVSSAKPKIGAYHFTTIVPNLGMVRTKSGDSFAMADLPGLIEGASQGVGLGTQFLRHIERTRVILHVIDMSASEGRDPYEDYVSINNELETYNLRLMERPQIIVANKMDMPEAQENLKAFKKKLAAQYDEFDDLPMIFPISSLAHQGLENLLEATAELLAKTDEFLLYDESDLVDEEAYYGFAKTEKDFEITRDDDATWVLSGEKLERLFVMTNMERDESIMKFARQLRGMGVDEALRERGAKDGDPVRIGKFEFEFVD.

Positions 2–160 constitute an Obg domain; it reads SMFLDTAKIS…RQLELELKIL (159 aa). The OBG-type G domain occupies 161 to 338; that stretch reads ADVGLVGFPS…LLEATAELLA (178 aa). GTP-binding positions include 167–174, 192–196, 214–217, 284–287, and 319–321; these read GFPSVGKS, FTTIV, DLPG, NKMD, and SSL. Residues S174 and T194 each coordinate Mg(2+). An OCT domain is found at 359 to 437; the sequence is GFAKTEKDFE…IGKFEFEFVD (79 aa).

It belongs to the TRAFAC class OBG-HflX-like GTPase superfamily. OBG GTPase family. Monomer. The cofactor is Mg(2+).

The protein localises to the cytoplasm. Its function is as follows. An essential GTPase which binds GTP, GDP and possibly (p)ppGpp with moderate affinity, with high nucleotide exchange rates and a fairly low GTP hydrolysis rate. Plays a role in control of the cell cycle, stress response, ribosome biogenesis and in those bacteria that undergo differentiation, in morphogenesis control. The protein is GTPase Obg of Streptococcus pyogenes serotype M2 (strain MGAS10270).